The chain runs to 337 residues: Putative 4-hydroxythreonine-4-phosphate dehydrogenase 2 (337 aa).

The a divalent metal cation site is built by His-173, His-217, and His-274.

Belongs to the PdxA family. In terms of assembly, homodimer. The cofactor is Zn(2+). Mg(2+) serves as cofactor. It depends on Co(2+) as a cofactor.

The protein localises to the cytoplasm. The enzyme catalyses 4-(phosphooxy)-L-threonine + NAD(+) = 3-amino-2-oxopropyl phosphate + CO2 + NADH. It functions in the pathway cofactor biosynthesis; pyridoxine 5'-phosphate biosynthesis; pyridoxine 5'-phosphate from D-erythrose 4-phosphate: step 4/5. Its function is as follows. Catalyzes the NAD(P)-dependent oxidation of 4-(phosphooxy)-L-threonine (HTP) into 2-amino-3-oxo-4-(phosphooxy)butyric acid which spontaneously decarboxylates to form 3-amino-2-oxopropyl phosphate (AHAP). This is Putative 4-hydroxythreonine-4-phosphate dehydrogenase 2 from Pseudomonas aeruginosa (strain ATCC 15692 / DSM 22644 / CIP 104116 / JCM 14847 / LMG 12228 / 1C / PRS 101 / PAO1).